The sequence spans 362 residues: UDP-N-acetylglucosamine--N-acetylmuramyl-(pentapeptide) pyrophosphoryl-undecaprenol N-acetylglucosamine transferase (362 aa).

Residues 15–17 (TGG), N127, R165, S191, I247, 266–271 (ALTVSE), and Q292 each bind UDP-N-acetyl-alpha-D-glucosamine.

Belongs to the glycosyltransferase 28 family. MurG subfamily.

Its subcellular location is the cell inner membrane. The catalysed reaction is di-trans,octa-cis-undecaprenyl diphospho-N-acetyl-alpha-D-muramoyl-L-alanyl-D-glutamyl-meso-2,6-diaminopimeloyl-D-alanyl-D-alanine + UDP-N-acetyl-alpha-D-glucosamine = di-trans,octa-cis-undecaprenyl diphospho-[N-acetyl-alpha-D-glucosaminyl-(1-&gt;4)]-N-acetyl-alpha-D-muramoyl-L-alanyl-D-glutamyl-meso-2,6-diaminopimeloyl-D-alanyl-D-alanine + UDP + H(+). It participates in cell wall biogenesis; peptidoglycan biosynthesis. Functionally, cell wall formation. Catalyzes the transfer of a GlcNAc subunit on undecaprenyl-pyrophosphoryl-MurNAc-pentapeptide (lipid intermediate I) to form undecaprenyl-pyrophosphoryl-MurNAc-(pentapeptide)GlcNAc (lipid intermediate II). The sequence is that of UDP-N-acetylglucosamine--N-acetylmuramyl-(pentapeptide) pyrophosphoryl-undecaprenol N-acetylglucosamine transferase from Shewanella sp. (strain ANA-3).